The sequence spans 407 residues: Betaine--homocysteine S-methyltransferase 1 (407 aa).

Positions lysine 11–leucine 314 constitute a Hcy-binding domain. N6-succinyllysine occurs at positions 40, 93, and 98. Residue cysteine 217 participates in Zn(2+) binding. An N6-succinyllysine mark is found at lysine 232 and lysine 241. Cysteine 299 and cysteine 300 together coordinate Zn(2+). At serine 330 the chain carries Phosphoserine. An N6-succinyllysine mark is found at lysine 340 and lysine 377.

Homotetramer. The cofactor is Zn(2+).

Its subcellular location is the cytoplasm. It localises to the cytosol. The protein localises to the nucleus. The catalysed reaction is L-homocysteine + glycine betaine = N,N-dimethylglycine + L-methionine. Its pathway is amine and polyamine degradation; betaine degradation; sarcosine from betaine: step 1/2. It participates in amino-acid biosynthesis; L-methionine biosynthesis via de novo pathway; L-methionine from L-homocysteine (BhmT route): step 1/1. Its function is as follows. Involved in the regulation of homocysteine metabolism. Converts betaine and homocysteine to dimethylglycine and methionine, respectively. This reaction is also required for the irreversible oxidation of choline. This Bos taurus (Bovine) protein is Betaine--homocysteine S-methyltransferase 1 (BHMT).